Reading from the N-terminus, the 442-residue chain is MSTVKTFSSTETEGFKKRLLSRRHSSYQVRDEEDDVLEEFIVLKLDLFLTRLNHRMKRLEELGLPNRKDAAAATYQFLANLQASFLGTTILGKTQVSFILRRIEETYNDVLSACDTFPAKAQKALTFLEHHLRDLEDYAEKSKNNVETLMTDIKDVVEHAAKLGAQRLITLEELPVQWHNNPYIIRGYRFYTSKRKCFRSILSWHNETFNIWTHLSAFIVFFAVLAYFYPSSSSWVSSNVSNRIVRIFFLLSAMKCLGCSVIWHTFSSLSNYKHMRCAACMDYVGISALIAASIISVEYHAFVCQGPLRFIFIAFTGTLGLIGIYTPWKKWFNEYKYRSVKIFFFVGLACSGLIPMITMFYIKGTRRTVKYLDPVFKSIFSYIIGVLFYGLHIPERFLPGKFDIIGNSHQIWHIAIIVGVAFHYTGVKRFETDYEAFSCGVL.

The next 7 membrane-spanning stretches (helical) occupy residues 209 to 229, 247 to 267, 284 to 304, 308 to 328, 342 to 362, 374 to 394, and 402 to 422; these read FNIWTHLSAFIVFFAVLAYFY, IFFLLSAMKCLGCSVIWHTFS, VGISALIAASIISVEYHAFVC, LRFIFIAFTGTLGLIGIYTPW, IFFFVGLACSGLIPMITMFYI, PVFKSIFSYIIGVLFYGLHIP, and FDIIGNSHQIWHIAIIVGVAF.

It localises to the membrane. This is an uncharacterized protein from Schizosaccharomyces pombe (strain 972 / ATCC 24843) (Fission yeast).